The sequence spans 83 residues: Large ribosomal subunit protein bL27 (83 aa).

The disordered stretch occupies residues 1 to 25 (MAHKKGQGASRNGRDSESKRLGLKV).

It belongs to the bacterial ribosomal protein bL27 family.

This is Large ribosomal subunit protein bL27 from Chlamydia muridarum (strain MoPn / Nigg).